The following is a 377-amino-acid chain: Histidine protein methyltransferase 1 (377 aa).

Belongs to the methyltransferase superfamily. METTL18 family.

The protein resides in the cytoplasm. Its subcellular location is the nucleus. The enzyme catalyses L-histidyl-[protein] + S-adenosyl-L-methionine = N(tele)-methyl-L-histidyl-[protein] + S-adenosyl-L-homocysteine + H(+). Its function is as follows. Protein-histidine N-methyltransferase that mediates methylation of RPL3 at 'His-243'. Methylates ribosome-associated RPL3, but not free RPL3, thereby regulating 60S subunit assembly. In addition to RPL3, mediates His methylation of other proteins. This Saccharomyces cerevisiae (strain ATCC 204508 / S288c) (Baker's yeast) protein is Histidine protein methyltransferase 1.